We begin with the raw amino-acid sequence, 410 residues long: Cathepsin D (410 aa).

The N-terminal stretch at 1–18 (MQPPSLLLLVLGLLAAPA) is a signal peptide. Positions 19 to 64 (AALVRIPLHKFTSVRRTMTELGGPVEDLIAKGPISKYAQGAPAVTG) are cleaved as a propeptide — activation peptide. Residues 79 to 405 (YYGEIGIGTP…DRDQNRVGLA (327 aa)) enclose the Peptidase A1 domain. 2 disulfide bridges follow: cysteine 91-cysteine 160 and cysteine 110-cysteine 117. Residue aspartate 97 is part of the active site. N-linked (GlcNAc...) asparagine glycosylation is found at asparagine 134 and asparagine 261. The cysteines at positions 284 and 288 are disulfide-linked. The active site involves aspartate 293. Residues cysteine 327 and cysteine 364 are joined by a disulfide bond.

Belongs to the peptidase A1 family. In terms of assembly, consists of a light chain and a heavy chain. Interacts with ADAM30; this leads to activation of CTSD. Interacts with GRN; stabilizes CTSD; increases its proteolytic activity. Post-translationally, N- and O-glycosylated. Undergoes proteolytic cleavage and activation by ADAM30.

It localises to the lysosome. The protein localises to the melanosome. The protein resides in the secreted. It is found in the extracellular space. The enzyme catalyses Specificity similar to, but narrower than, that of pepsin A. Does not cleave the 4-Gln-|-His-5 bond in B chain of insulin.. Functionally, acid protease active in intracellular protein breakdown. Plays a role in APP processing following cleavage and activation by ADAM30 which leads to APP degradation. The chain is Cathepsin D (CTSD) from Canis lupus familiaris (Dog).